We begin with the raw amino-acid sequence, 841 residues long: Nuclear RNA export factor 2 (841 aa).

Residues 1 to 285 (MPNQMRVLDF…NFELVDGKPF (285 aa)) form an RNA-binding unit probably involved in Piwi-dependent recruitment and single-stranded RNA-PPNP complex formation region. 3 LRR repeats span residues 200 to 221 (RLNGFILSNNRIRDIRPLTLLA), 224 to 245 (DYALLDLRGNKIKSAERLCRAL), and 249 to 270 (RARELLLENNPIVKISNFPANI). Residues 286–553 (NMLHKIFSPL…EYVRAVKEVF (268 aa)) form a necessary for silencing function region. The RRM domain occupies 325–408 (WHAFMIPDPS…IFRYYLRMNV (84 aa)). 3 LRR repeats span residues 475-496 (TCSEIRLCHNKVLVLDGAHVLG), 500-521 (CLRAVDLSHNWVQDLSSIHSLG), and 524-545 (PLKSLVLHGNKLCRNYRLPSEY). The NTF2 domain occupies 585–758 (LVGAFLENYL…LKIANERLHI (174 aa)). The region spanning 788–841 (DVKDHKLLLFQEVTGLISTWVTSIVEEADWDFERALKLFIQKNADHEIPDLAFA) is the TAP-C domain.

Belongs to the NXF family. As to quaternary structure, in the ovaries, part of a complex composed of at least Panx, nxf2, piwi and Nxt1. The complex is knowns as Panx-induced cotranscriptional silencing (PICTS) complex, Panx-nxf2-dependent TAP/p15 silencing (Pandas complex), SFiNX (silencing factor interacting nuclear export variant) or piwi-Panx-nxf2-p15 (PPNP) complex. Interacts (via TAP-C domain) with Panx (via NIR region); the interaction is direct. Interacts (via NTF2 domain) with Nxt1; the interaction is direct and prevents Nxt1 binding to nucleoporins. Interacts with sbr/Nxf1. Expressed in female gonads (at protein level). Expressed ubiquitously.

It is found in the cytoplasm. Its subcellular location is the nucleus. The protein localises to the nucleoplasm. Its function is as follows. May be involved in the export of mRNA from the nucleus to the cytoplasm. In the ovaries, forms a complex with nxf2, piwi and Nxt1 which acts as effectors of cotranscriptional transposon silencing. On recruitment to a target transcript, interacts with single stranded RNA, thereby anchoring the complex via the nascent target transcript to chromatin and allowing Panx to recruit silencing effectors to establishing repressive heterochromatin at transposon loci. Does not affect piRNA biogenesis. The interaction with Panx stabilizes the nuclear protein complex. Does not bind nucleoporins, but regulates sbr/Nxf1 binding to nucleoporins and, indirectly, transposon exports. This chain is Nuclear RNA export factor 2 (nxf2), found in Drosophila melanogaster (Fruit fly).